A 172-amino-acid chain; its full sequence is Shikimate kinase (172 aa).

Residue 14–19 coordinates ATP; that stretch reads GAGKTT. T18 contributes to the Mg(2+) binding site. Residues D36, R60, and G82 each coordinate substrate. Residue R119 participates in ATP binding. Substrate is bound at residue R137.

This sequence belongs to the shikimate kinase family. In terms of assembly, monomer. It depends on Mg(2+) as a cofactor.

It is found in the cytoplasm. The catalysed reaction is shikimate + ATP = 3-phosphoshikimate + ADP + H(+). It functions in the pathway metabolic intermediate biosynthesis; chorismate biosynthesis; chorismate from D-erythrose 4-phosphate and phosphoenolpyruvate: step 5/7. Functionally, catalyzes the specific phosphorylation of the 3-hydroxyl group of shikimic acid using ATP as a cosubstrate. The protein is Shikimate kinase of Thermobifida fusca (strain YX).